The primary structure comprises 128 residues: Arsenic resistance transcriptional regulator ArsR1 (128 aa).

An HTH arsR-type domain is found at 11-103 (MREILTPPIV…AMLKGVVDAN (93 aa)). Cys43 and Cys45 together coordinate arsenite. A DNA-binding region (H-T-H motif) is located at residues 44–67 (VCELTHALELSQPKISRHLAQLRE).

As to quaternary structure, homodimer.

It localises to the cytoplasm. Functionally, binds arsenite and regulates the expression of arsenic efflux pumps. In vitro, also binds antimony and bismuth, but not arsenate. The chain is Arsenic resistance transcriptional regulator ArsR1 from Pseudomonas putida (strain ATCC 47054 / DSM 6125 / CFBP 8728 / NCIMB 11950 / KT2440).